A 322-amino-acid chain; its full sequence is Ferredoxin--NADP reductase (322 aa).

Residues Asp34, Gln42, Tyr47, Val87, Phe120, Asp279, and Thr320 each coordinate FAD.

It belongs to the ferredoxin--NADP reductase type 2 family. Homodimer. It depends on FAD as a cofactor.

The enzyme catalyses 2 reduced [2Fe-2S]-[ferredoxin] + NADP(+) + H(+) = 2 oxidized [2Fe-2S]-[ferredoxin] + NADPH. The sequence is that of Ferredoxin--NADP reductase from Streptococcus sanguinis (strain SK36).